The primary structure comprises 274 residues: 3-methyl-2-oxobutanoate hydroxymethyltransferase (274 aa).

Positions 49 and 88 each coordinate Mg(2+). 3-methyl-2-oxobutanoate is bound by residues 49-50 (DS), D88, and K118. E120 serves as a coordination point for Mg(2+). Catalysis depends on E187, which acts as the Proton acceptor.

This sequence belongs to the PanB family. As to quaternary structure, homodecamer; pentamer of dimers. Mg(2+) is required as a cofactor.

The protein localises to the cytoplasm. It carries out the reaction 3-methyl-2-oxobutanoate + (6R)-5,10-methylene-5,6,7,8-tetrahydrofolate + H2O = 2-dehydropantoate + (6S)-5,6,7,8-tetrahydrofolate. It participates in cofactor biosynthesis; (R)-pantothenate biosynthesis; (R)-pantoate from 3-methyl-2-oxobutanoate: step 1/2. In terms of biological role, catalyzes the reversible reaction in which hydroxymethyl group from 5,10-methylenetetrahydrofolate is transferred onto alpha-ketoisovalerate to form ketopantoate. The sequence is that of 3-methyl-2-oxobutanoate hydroxymethyltransferase from Rhodopseudomonas palustris (strain HaA2).